Here is a 196-residue protein sequence, read N- to C-terminus: Imidazoleglycerol-phosphate dehydratase (196 aa).

This sequence belongs to the imidazoleglycerol-phosphate dehydratase family.

It localises to the cytoplasm. It carries out the reaction D-erythro-1-(imidazol-4-yl)glycerol 3-phosphate = 3-(imidazol-4-yl)-2-oxopropyl phosphate + H2O. The protein operates within amino-acid biosynthesis; L-histidine biosynthesis; L-histidine from 5-phospho-alpha-D-ribose 1-diphosphate: step 6/9. The protein is Imidazoleglycerol-phosphate dehydratase of Clostridium botulinum (strain ATCC 19397 / Type A).